A 309-amino-acid polypeptide reads, in one-letter code: Aspartate carbamoyltransferase catalytic subunit (309 aa).

Residues Arg-49 and Thr-50 each contribute to the carbamoyl phosphate site. Lys-77 contacts L-aspartate. Residues Arg-99, His-127, and Gln-130 each coordinate carbamoyl phosphate. The L-aspartate site is built by Arg-160 and Arg-211. Carbamoyl phosphate-binding residues include Ala-252 and Pro-253.

Belongs to the aspartate/ornithine carbamoyltransferase superfamily. ATCase family. Heterododecamer (2C3:3R2) of six catalytic PyrB chains organized as two trimers (C3), and six regulatory PyrI chains organized as three dimers (R2).

The catalysed reaction is carbamoyl phosphate + L-aspartate = N-carbamoyl-L-aspartate + phosphate + H(+). It functions in the pathway pyrimidine metabolism; UMP biosynthesis via de novo pathway; (S)-dihydroorotate from bicarbonate: step 2/3. Its function is as follows. Catalyzes the condensation of carbamoyl phosphate and aspartate to form carbamoyl aspartate and inorganic phosphate, the committed step in the de novo pyrimidine nucleotide biosynthesis pathway. The chain is Aspartate carbamoyltransferase catalytic subunit from Geobacillus sp. (strain WCH70).